A 352-amino-acid chain; its full sequence is Sphingosine 1-phosphate receptor 2 (352 aa).

The Extracellular segment spans residues 1–34; that stretch reads MGGLYSEYLNPEKVLEHYNYTKETLDMQETTSRK. A glycan (N-linked (GlcNAc...) asparagine) is linked at N19. A helical membrane pass occupies residues 35–59; sequence VASAFIIILCCAIVVENLLVLIAVA. Residues 60–66 lie on the Cytoplasmic side of the membrane; that stretch reads RNSKFHS. Residues 67–95 traverse the membrane as a helical segment; sequence AMYLFLGNLAASDLLAGVAFVANTLLSGH. At 96 to 109 the chain is on the extracellular side; it reads VTLSLTPVQWFARE. Residues 110–128 traverse the membrane as a helical segment; sequence GSAFITLSASVFSLLAIAI. The Cytoplasmic segment spans residues 129-147; that stretch reads ERQVALAKVKLYGSDKSCR. Residues 148–173 form a helical membrane-spanning segment; sequence MLMLIGASWLISLILGGLPILGWNCL. The Extracellular segment spans residues 174-189; the sequence is NQLEACSTVLPLYAKH. A helical transmembrane segment spans residues 190-210; it reads YVLCVVTIFSVILLAIVALYV. Residues 211-233 are Cytoplasmic-facing; that stretch reads RIYFVVRSSHADVAGPQTLALLK. A helical transmembrane segment spans residues 234 to 255; the sequence is TVTIVLGVFIICWLPAFSILLL. The Extracellular portion of the chain corresponds to 256 to 271; the sequence is DSTCPVRACPVLYKAH. A helical transmembrane segment spans residues 272-292; sequence YFFAFATLNSLLNPVIYTWRS. Residues 293 to 352 lie on the Cytoplasmic side of the membrane; that stretch reads RDLRREVLRPLQCWRRGKGVTGRRGGNPGHRLLPLRSSSSLERGMHMPTSPTFLEGNTVV. A lipid anchor (S-palmitoyl cysteine) is attached at C305. Residues 333–352 form a disordered region; sequence LERGMHMPTSPTFLEGNTVV.

It belongs to the G-protein coupled receptor 1 family. As to expression, most abundant in heart and lung; low, but clearly observed in kidney, liver and thymus; much lower but detectable in brain, testis, stomach and intestine. Not significantly detected in any of the sections of embryonic day (E) 14-18, except in embryonic brain.

It is found in the cell membrane. Its function is as follows. Receptor for the lysosphingolipid sphingosine 1-phosphate (S1P). S1P is a bioactive lysophospholipid that elicits diverse physiological effects on most types of cells and tissues. Receptor for the chemokine-like protein FAM19A5. Mediates the inhibitory effect of FAM19A5 on vascular smooth muscle cell proliferation and migration. In lymphoid follicles, couples the binding of S1P to the activation of GNA13 and downstream inhibition of AKT activation leading to suppression of germinal center (GC) B cell growth and migration outside the GC niche. The sequence is that of Sphingosine 1-phosphate receptor 2 (S1pr2) from Mus musculus (Mouse).